The primary structure comprises 393 residues: DNA primase small subunit PriS (393 aa).

Residues aspartate 100, aspartate 102, and aspartate 296 contribute to the active site.

It belongs to the eukaryotic-type primase small subunit family. As to quaternary structure, heterodimer of a small subunit (PriS) and a large subunit (PriL). Mg(2+) is required as a cofactor. It depends on Mn(2+) as a cofactor.

In terms of biological role, catalytic subunit of DNA primase, an RNA polymerase that catalyzes the synthesis of short RNA molecules used as primers for DNA polymerase during DNA replication. The small subunit contains the primase catalytic core and has DNA synthesis activity on its own. Binding to the large subunit stabilizes and modulates the activity, increasing the rate of DNA synthesis while decreasing the length of the DNA fragments, and conferring RNA synthesis capability. The DNA polymerase activity may enable DNA primase to also catalyze primer extension after primer synthesis. May also play a role in DNA repair. This chain is DNA primase small subunit PriS, found in Natronomonas pharaonis (strain ATCC 35678 / DSM 2160 / CIP 103997 / JCM 8858 / NBRC 14720 / NCIMB 2260 / Gabara) (Halobacterium pharaonis).